The following is a 372-amino-acid chain: Anhydro-N-acetylmuramic acid kinase (372 aa).

ATP is bound at residue 21–28 (GTSMDGVD).

The protein belongs to the anhydro-N-acetylmuramic acid kinase family.

It catalyses the reaction 1,6-anhydro-N-acetyl-beta-muramate + ATP + H2O = N-acetyl-D-muramate 6-phosphate + ADP + H(+). The protein operates within amino-sugar metabolism; 1,6-anhydro-N-acetylmuramate degradation. Its pathway is cell wall biogenesis; peptidoglycan recycling. Its function is as follows. Catalyzes the specific phosphorylation of 1,6-anhydro-N-acetylmuramic acid (anhMurNAc) with the simultaneous cleavage of the 1,6-anhydro ring, generating MurNAc-6-P. Is required for the utilization of anhMurNAc either imported from the medium or derived from its own cell wall murein, and thus plays a role in cell wall recycling. The protein is Anhydro-N-acetylmuramic acid kinase of Bordetella avium (strain 197N).